The chain runs to 246 residues: 3-deoxy-manno-octulosonate cytidylyltransferase (246 aa).

This sequence belongs to the KdsB family.

It is found in the cytoplasm. The catalysed reaction is 3-deoxy-alpha-D-manno-oct-2-ulosonate + CTP = CMP-3-deoxy-beta-D-manno-octulosonate + diphosphate. It participates in nucleotide-sugar biosynthesis; CMP-3-deoxy-D-manno-octulosonate biosynthesis; CMP-3-deoxy-D-manno-octulosonate from 3-deoxy-D-manno-octulosonate and CTP: step 1/1. It functions in the pathway bacterial outer membrane biogenesis; lipopolysaccharide biosynthesis. Its function is as follows. Activates KDO (a required 8-carbon sugar) for incorporation into bacterial lipopolysaccharide in Gram-negative bacteria. The polypeptide is 3-deoxy-manno-octulosonate cytidylyltransferase (Leptospira biflexa serovar Patoc (strain Patoc 1 / Ames)).